The primary structure comprises 873 residues: Cilia- and flagella-associated protein 58 (873 aa).

2 coiled-coil regions span residues 106 to 609 and 642 to 832; these read VDSA…VISE and ETQY…QKRK. Residues 202–221 are disordered; that stretch reads QEIQHRQNEASRESRKKEKL. The span at 204-221 shows a compositional bias: basic and acidic residues; the sequence is IQHRQNEASRESRKKEKL.

It belongs to the CFAP58 family. In terms of assembly, interacts with ODFP2. In terms of tissue distribution, predominantly expressed in the testis. Also found at lower levels in ciliated cells and tissues such as neural progenitor cells and oviducts.

Its subcellular location is the cell projection. The protein resides in the cilium. The protein localises to the flagellum. It localises to the cytoplasm. It is found in the cytoskeleton. Its subcellular location is the microtubule organizing center. The protein resides in the centrosome. Has an essential role in the assembly and organization of the sperm flagellar axoneme. Required for the elongation of the primary cilium and sperm flagellar midpiece via modulation of the Notch signaling pathway. This chain is Cilia- and flagella-associated protein 58, found in Mus musculus (Mouse).